The chain runs to 150 residues: Ribonuclease H (150 aa).

The 146-residue stretch at 1–146 (MPELFAYTDG…ADELARAGMA (146 aa)) folds into the RNase H type-1 domain. Residues D9, E52, D74, and D138 each contribute to the Mg(2+) site.

Belongs to the RNase H family. In terms of assembly, monomer. Mg(2+) serves as cofactor.

It is found in the cytoplasm. It carries out the reaction Endonucleolytic cleavage to 5'-phosphomonoester.. Functionally, endonuclease that specifically degrades the RNA of RNA-DNA hybrids. This is Ribonuclease H from Roseobacter denitrificans (strain ATCC 33942 / OCh 114) (Erythrobacter sp. (strain OCh 114)).